Reading from the N-terminus, the 95-residue chain is Small ribosomal subunit protein bS20 (95 aa).

Belongs to the bacterial ribosomal protein bS20 family.

Functionally, binds directly to 16S ribosomal RNA. This is Small ribosomal subunit protein bS20 from Ehrlichia canis (strain Jake).